Here is a 145-residue protein sequence, read N- to C-terminus: Peptide methionine sulfoxide reductase MsrB (145 aa).

The MsrB domain maps to 6–129 (KNERLQQLTD…NSAALRFIPV (124 aa)). C118 acts as the Nucleophile in catalysis.

The protein belongs to the MsrB Met sulfoxide reductase family.

The catalysed reaction is L-methionyl-[protein] + [thioredoxin]-disulfide + H2O = L-methionyl-(R)-S-oxide-[protein] + [thioredoxin]-dithiol. The chain is Peptide methionine sulfoxide reductase MsrB from Listeria monocytogenes serotype 4a (strain HCC23).